Here is a 118-residue protein sequence, read N- to C-terminus: Small ribosomal subunit protein uS13 (118 aa).

The segment at 94–118 is disordered; that stretch reads GLPLRGQRTRTNARTRKGPRRPIRK.

Belongs to the universal ribosomal protein uS13 family. Part of the 30S ribosomal subunit. Forms a loose heterodimer with protein S19. Forms two bridges to the 50S subunit in the 70S ribosome.

Functionally, located at the top of the head of the 30S subunit, it contacts several helices of the 16S rRNA. In the 70S ribosome it contacts the 23S rRNA (bridge B1a) and protein L5 of the 50S subunit (bridge B1b), connecting the 2 subunits; these bridges are implicated in subunit movement. Contacts the tRNAs in the A and P-sites. The sequence is that of Small ribosomal subunit protein uS13 from Thioalkalivibrio sulfidiphilus (strain HL-EbGR7).